The sequence spans 354 residues: Homeobox-leucine zipper protein HOX27 (354 aa).

Residues 98–175 (SVAAGAPGME…DDEGASARKK (78 aa)) are disordered. A compositionally biased stretch (gly residues) spans 148 to 157 (QGGGGGGGGE). Positions 171-230 (SARKKLRLSKEQSAFLEESFKEHSTLNPKQKVALAKQLNLRPRQVEVWFQNRRARTKLKQ) form a DNA-binding region, homeobox. Residues 229–273 (KQTEVDCEYLKRCCETLTEENRRLHKELAELRALKTARPFYMHLP) form a leucine-zipper region. The disordered stretch occupies residues 294 to 323 (STSAPAAATSPAAAPTAAARTAVASPEPHR).

The protein belongs to the HD-ZIP homeobox family. Class II subfamily. In terms of tissue distribution, expressed in seedlings, roots, stems, leaf sheaths and blades and panicles.

The protein resides in the nucleus. Probable transcription factor. This is Homeobox-leucine zipper protein HOX27 (HOX27) from Oryza sativa subsp. japonica (Rice).